A 201-amino-acid chain; its full sequence is Dephospho-CoA kinase (201 aa).

The 195-residue stretch at 7-201 (AIALSGGIGT…IETIKKDFHV (195 aa)) folds into the DPCK domain. 15-20 (GTGKST) is an ATP binding site.

Belongs to the CoaE family.

Its subcellular location is the cytoplasm. It carries out the reaction 3'-dephospho-CoA + ATP = ADP + CoA + H(+). It participates in cofactor biosynthesis; coenzyme A biosynthesis; CoA from (R)-pantothenate: step 5/5. In terms of biological role, catalyzes the phosphorylation of the 3'-hydroxyl group of dephosphocoenzyme A to form coenzyme A. The chain is Dephospho-CoA kinase from Wolinella succinogenes (strain ATCC 29543 / DSM 1740 / CCUG 13145 / JCM 31913 / LMG 7466 / NCTC 11488 / FDC 602W) (Vibrio succinogenes).